Here is a 563-residue protein sequence, read N- to C-terminus: Eukaryotic translation initiation factor 3 subunit D (563 aa).

Residues 95 to 136 (PGYMRNRNRFNQRGGYRRDNRGGRFQGQGGNMGMQNLSRGRD) are disordered. An RNA gate region spans residues 294–308 (EFDLLTVGETANDLN). Residues 528–563 (IPNSTFETDEEDDDDDEDDVENDDGDDEKDEGDGED) are disordered. Acidic residues predominate over residues 534–563 (ETDEEDDDDDEDDVENDDGDDEKDEGDGED).

The protein belongs to the eIF-3 subunit D family. In terms of assembly, component of the eukaryotic translation initiation factor 3 (eIF-3) complex.

Its subcellular location is the cytoplasm. Functionally, mRNA cap-binding component of the eukaryotic translation initiation factor 3 (eIF-3) complex, which is involved in protein synthesis of a specialized repertoire of mRNAs and, together with other initiation factors, stimulates binding of mRNA and methionyl-tRNAi to the 40S ribosome. The eIF-3 complex specifically targets and initiates translation of a subset of mRNAs involved in cell proliferation. In the eIF-3 complex, eif3d specifically recognizes and binds the 7-methylguanosine cap of a subset of mRNAs. The sequence is that of Eukaryotic translation initiation factor 3 subunit D from Nematostella vectensis (Starlet sea anemone).